Here is a 209-residue protein sequence, read N- to C-terminus: RNA chaperone ProQ (209 aa).

A disordered region spans residues 105–148 (ESQDKAKAKRAALAPKPAAKKAPKKVAVPQRAKTERPAKPAPKA).

It belongs to the ProQ family.

Its subcellular location is the cytoplasm. Functionally, RNA chaperone with significant RNA binding, RNA strand exchange and RNA duplexing activities. The protein is RNA chaperone ProQ of Shewanella baltica (strain OS223).